Here is a 445-residue protein sequence, read N- to C-terminus: ATP synthase subunit b-delta (445 aa).

Positions 1-168 are ATP synthase subunit b; that stretch reads MSTFIGQLVG…PAAAEVERPV (168 aa). Residues 4-24 traverse the membrane as a helical segment; the sequence is FIGQLVGFAAIVFLVWRYVVP. The segment at 169-445 is ATP synthase subunit delta; the sequence is AAKMRSASRR…LTAAEAQLPD (277 aa).

The protein in the N-terminal section; belongs to the ATPase B chain family. It in the C-terminal section; belongs to the ATPase delta chain family. As to quaternary structure, F-type ATPases have 2 components, F(1) - the catalytic core - and F(0) - the membrane proton channel. F(1) has five subunits: alpha(3), beta(3), gamma(1), delta(1), epsilon(1). F(0) has three main subunits: a(1), b(2) and c(10-14). The alpha and beta chains form an alternating ring which encloses part of the gamma chain. F(1) is attached to F(0) by a central stalk formed by the gamma and epsilon chains, while a peripheral stalk is formed by the delta and b chains.

The protein localises to the cell membrane. Its function is as follows. F(1)F(0) ATP synthase produces ATP from ADP in the presence of a proton or sodium gradient. F-type ATPases consist of two structural domains, F(1) containing the extramembraneous catalytic core and F(0) containing the membrane proton channel, linked together by a central stalk and a peripheral stalk. During catalysis, ATP synthesis in the catalytic domain of F(1) is coupled via a rotary mechanism of the central stalk subunits to proton translocation. This fusion protein includes a component of the F(0) channel (subunit b) and of the F(1) subunit (subunit delta). Two copies of subunit b and one of delta together form the peripheral 'stator' stalk which links F(1) to F(0). The chain is ATP synthase subunit b-delta (atpFH) from Mycobacterium ulcerans (strain Agy99).